We begin with the raw amino-acid sequence, 280 residues long: 4-diphosphocytidyl-2-C-methyl-D-erythritol kinase (280 aa).

Residue Lys-9 is part of the active site. Position 93-103 (93-103) interacts with ATP; that stretch reads PVAAGLGGGSS. Asp-135 is a catalytic residue.

Belongs to the GHMP kinase family. IspE subfamily.

It carries out the reaction 4-CDP-2-C-methyl-D-erythritol + ATP = 4-CDP-2-C-methyl-D-erythritol 2-phosphate + ADP + H(+). The protein operates within isoprenoid biosynthesis; isopentenyl diphosphate biosynthesis via DXP pathway; isopentenyl diphosphate from 1-deoxy-D-xylulose 5-phosphate: step 3/6. Catalyzes the phosphorylation of the position 2 hydroxy group of 4-diphosphocytidyl-2C-methyl-D-erythritol. This is 4-diphosphocytidyl-2-C-methyl-D-erythritol kinase from Syntrophotalea carbinolica (strain DSM 2380 / NBRC 103641 / GraBd1) (Pelobacter carbinolicus).